The following is a 136-amino-acid chain: Ubiquinol-cytochrome-c reductase complex assembly factor 2 (136 aa).

A mitochondrion-targeting transit peptide spans 1-13; sequence MAALRYRRFLKLC.

As to quaternary structure, interacts with UQCC1.

The protein localises to the mitochondrion matrix. It localises to the mitochondrion nucleoid. Its subcellular location is the mitochondrion. The protein resides in the mitochondrion intermembrane space. It is found in the mitochondrion inner membrane. In terms of biological role, required for the assembly of the ubiquinol-cytochrome c reductase complex (mitochondrial respiratory chain complex III or cytochrome b-c1 complex). Plays a role in the modulation of respiratory chain activities such as oxygen consumption and ATP production and via its modulation of the respiratory chain activity can regulate skeletal muscle differentiation and insulin secretion by pancreatic beta-cells. Involved in cytochrome b translation and/or stability. The protein is Ubiquinol-cytochrome-c reductase complex assembly factor 2 (Uqcc2) of Rattus norvegicus (Rat).